The following is a 697-amino-acid chain: Glycine--tRNA ligase beta subunit (697 aa).

The protein belongs to the class-II aminoacyl-tRNA synthetase family. Tetramer of two alpha and two beta subunits.

Its subcellular location is the cytoplasm. It carries out the reaction tRNA(Gly) + glycine + ATP = glycyl-tRNA(Gly) + AMP + diphosphate. The chain is Glycine--tRNA ligase beta subunit from Solidesulfovibrio magneticus (strain ATCC 700980 / DSM 13731 / RS-1) (Desulfovibrio magneticus).